A 619-amino-acid chain; its full sequence is Zinc finger protein 131 (619 aa).

Residues 34 to 98 (TDITLIVDGH…TYTAKLMIQG (65 aa)) form the BTB domain. The Nuclear localization signal 1 motif lies at 137–148 (TGKNEAKKRKIA). At Ser231 the chain carries Phosphoserine. C2H2-type zinc fingers lie at residues 261–283 (FHCE…MKSH), 288–311 (FKCE…NCYH), and 328–350 (HICQ…LRKH). Glycyl lysine isopeptide (Lys-Gly) (interchain with G-Cter in SUMO2) cross-links involve residues Lys289 and Lys295. The short motif at 317–328 (VSKKQRTGKKIH) is the Nuclear localization signal 2 element. The C2H2-type 4; degenerate zinc finger occupies 356 to 381 (FECSNCHERFARNSTLKCHLTACQTG). C2H2-type zinc fingers lie at residues 392–414 (YECQ…LVIH) and 420–443 (NHCT…SDAH). 2 stretches are compositionally biased toward basic and acidic residues: residues 574 to 587 (QEER…AAME) and 595 to 612 (LETK…ENDR). Residues 574-619 (QEEREPNHADAAMEEHEDAEGLETKPSEYSQARKTENDRTSLPVLE) are disordered. Lys598 participates in a covalent cross-link: Glycyl lysine isopeptide (Lys-Gly) (interchain with G-Cter in SUMO).

It belongs to the krueppel C2H2-type zinc-finger protein family. Post-translationally, monosumoylated at Lys-598 by CBX4 and UHRF2. Sumoylation may potentiate ZNF131 inhibition of estrogen signaling. Sumoylation does not interfere with ubiquitination. In terms of processing, ubiquitinated. As to expression, ubiquitously expressed. Predominant expression is found in the developing central nervous system with strongest signals in the forebrain, midbrain, and hindbrain areas and in the neural tube.

The protein localises to the nucleus. In terms of biological role, may be involved in transcriptional regulation as a repressor of ESR1/ER-alpha signaling. Plays a role during development and organogenesis as well as in the function of the adult central nervous system. The protein is Zinc finger protein 131 (Znf131) of Mus musculus (Mouse).